A 113-amino-acid polypeptide reads, in one-letter code: MIGPKPTLEDIVLDLQPFPQPQPVDLMCYEQLSDSSEDEDEVDHHHNNQQQHHQHARPEVPEDGDCYRIVSDCYSCGKPLRLVVVSSHEELRVLEDLLMGTLDIVCPSCASRV.

An E7 terminal domain region spans residues 1 to 47 (MIGPKPTLEDIVLDLQPFPQPQPVDLMCYEQLSDSSEDEDEVDHHHN). The LXCXE motif; interaction with host RB1 and TMEM173/STING signature appears at 26 to 30 (LMCYE). Positions 30-62 (EQLSDSSEDEDEVDHHHNNQQQHHQHARPEVPE) are disordered. The segment at 73–109 (CYSCGKPLRLVVVSSHEELRVLEDLLMGTLDIVCPSC) is a zinc-finger region. The short motif at 91 to 99 (LRVLEDLLM) is the Nuclear export signal element.

The protein belongs to the papillomaviridae E7 protein family. Homodimer. Homooligomer. Interacts with host RB1; this interaction induces dissociation of RB1-E2F1 complex thereby disrupting RB1 activity. Interacts with host EP300; this interaction represses EP300 transcriptional activity. Interacts with protein E2; this interaction inhibits E7 oncogenic activity. Interacts with host TMEM173/STING; this interaction impairs the ability of TMEM173/STING to sense cytosolic DNA and promote the production of type I interferon (IFN-alpha and IFN-beta). Highly phosphorylated.

The protein resides in the host cytoplasm. Its subcellular location is the host nucleus. Functionally, plays a role in viral genome replication by driving entry of quiescent cells into the cell cycle. Stimulation of progression from G1 to S phase allows the virus to efficiently use the cellular DNA replicating machinery to achieve viral genome replication. E7 protein has both transforming and trans-activating activities. Induces the disassembly of the E2F1 transcription factor from RB1, with subsequent transcriptional activation of E2F1-regulated S-phase genes. Interferes with host histone deacetylation mediated by HDAC1 and HDAC2, leading to transcription activation. Also plays a role in the inhibition of both antiviral and antiproliferative functions of host interferon alpha. Interaction with host TMEM173/STING impairs the ability of TMEM173/STING to sense cytosolic DNA and promote the production of type I interferon (IFN-alpha and IFN-beta). The chain is Protein E7 from Macaca mulatta (Rhesus macaque).